A 436-amino-acid polypeptide reads, in one-letter code: GTPase Der (436 aa).

2 consecutive EngA-type G domains span residues 4-167 and 176-351; these read PIVA…DEET and IRLS…ENHK. GTP contacts are provided by residues 10–17, 57–61, 119–122, 182–189, 229–233, and 294–297; these read GRPNVGKS, DTGGI, NKVD, DTAGM, and NKWD. A KH-like domain is found at 352 to 436; sequence KRVQSSTLNE…PIHIIPRRRN (85 aa).

The protein belongs to the TRAFAC class TrmE-Era-EngA-EngB-Septin-like GTPase superfamily. EngA (Der) GTPase family. In terms of assembly, associates with the 50S ribosomal subunit.

In terms of biological role, GTPase that plays an essential role in the late steps of ribosome biogenesis. The chain is GTPase Der from Staphylococcus haemolyticus (strain JCSC1435).